The chain runs to 355 residues: D-alanine--D-alanine ligase (355 aa).

The ATP-grasp domain maps to 143-350; sequence KTIFSNLKIP…IEQLVAKLVD (208 aa). 178 to 233 contacts ATP; sequence LKKLNFPFFVKPSNSGSSLGISKVINESEILQSLEKAQKIDSRILVEEGLEVREIE. 3 residues coordinate Mg(2+): D303, E317, and N319.

This sequence belongs to the D-alanine--D-alanine ligase family. Mg(2+) serves as cofactor. Requires Mn(2+) as cofactor.

It localises to the cytoplasm. It catalyses the reaction 2 D-alanine + ATP = D-alanyl-D-alanine + ADP + phosphate + H(+). The protein operates within cell wall biogenesis; peptidoglycan biosynthesis. Its function is as follows. Cell wall formation. The protein is D-alanine--D-alanine ligase of Prochlorococcus marinus (strain MIT 9215).